The following is a 396-amino-acid chain: NADH-quinone oxidoreductase subunit D (396 aa).

The protein belongs to the complex I 49 kDa subunit family. In terms of assembly, NDH-1 is composed of 14 different subunits. Subunits NuoB, C, D, E, F, and G constitute the peripheral sector of the complex.

It is found in the cell inner membrane. The enzyme catalyses a quinone + NADH + 5 H(+)(in) = a quinol + NAD(+) + 4 H(+)(out). Its function is as follows. NDH-1 shuttles electrons from NADH, via FMN and iron-sulfur (Fe-S) centers, to quinones in the respiratory chain. The immediate electron acceptor for the enzyme in this species is believed to be ubiquinone. Couples the redox reaction to proton translocation (for every two electrons transferred, four hydrogen ions are translocated across the cytoplasmic membrane), and thus conserves the redox energy in a proton gradient. The protein is NADH-quinone oxidoreductase subunit D of Mesorhizobium japonicum (strain LMG 29417 / CECT 9101 / MAFF 303099) (Mesorhizobium loti (strain MAFF 303099)).